The primary structure comprises 341 residues: Delta(1)-pyrroline-2-carboxylate reductase (341 aa).

The active-site Charge relay system is S47. The active-site Proton donor is the H48. A substrate-binding site is contributed by R52. H120–L124 lines the NADP(+) pocket. Residue T160 participates in substrate binding. D178 to A180 provides a ligand contact to NADP(+). R186 to G187 contributes to the substrate binding site. E188 acts as the Charge relay system in catalysis. Residues H229–K230 and R305–R311 contribute to the NADP(+) site.

The protein belongs to the LDH2/MDH2 oxidoreductase family. Homodimer.

The catalysed reaction is L-proline + NAD(+) = 1-pyrroline-2-carboxylate + NADH + H(+). It carries out the reaction L-proline + NADP(+) = 1-pyrroline-2-carboxylate + NADPH + H(+). In terms of biological role, catalyzes the reduction of Delta(1)-pyrroline-2-carboxylate (Pyr2C) to L-proline, using NADPH as the electron donor. Is likely involved in a degradation pathway that converts cis- and trans-3-hydroxy-L-proline (c3LHyp and t3LHyp) to L-proline, which would allow S.novella to grow on c3LHyp or t3LHyp as a sole carbon source. The sequence is that of Delta(1)-pyrroline-2-carboxylate reductase from Ancylobacter novellus (strain ATCC 8093 / DSM 506 / JCM 20403 / CCM 1077 / IAM 12100 / NBRC 12443 / NCIMB 10456) (Starkeya novella).